Reading from the N-terminus, the 254-residue chain is Acetylglutamate kinase (254 aa).

Residues 40–41 (GG), Arg62, and Asn154 contribute to the substrate site.

This sequence belongs to the acetylglutamate kinase family. ArgB subfamily.

Its subcellular location is the cytoplasm. The catalysed reaction is N-acetyl-L-glutamate + ATP = N-acetyl-L-glutamyl 5-phosphate + ADP. It participates in amino-acid biosynthesis; L-arginine biosynthesis; N(2)-acetyl-L-ornithine from L-glutamate: step 2/4. Catalyzes the ATP-dependent phosphorylation of N-acetyl-L-glutamate. The protein is Acetylglutamate kinase of Staphylococcus aureus (strain Mu3 / ATCC 700698).